The chain runs to 89 residues: Barrier-to-autointegration factor (89 aa).

Met1 bears the N-acetylmethionine mark. Residue Thr2 is modified to N-acetylthreonine; in Barrier-to-autointegration factor, N-terminally processed. Thr2 and Thr3 each carry phosphothreonine; by VRK1 and VRK2. At Ser4 the chain carries Phosphoserine; by VRK1 and VRK2. One can recognise a HhH domain in the interval Val20–Glu35.

This sequence belongs to the BAF family. In terms of assembly, homodimer. Heterodimerizes with BANF2. Interacts with ANKLE2/LEM4, leading to decreased phosphorylation by VRK1 and promoting dephosphorylation by protein phosphatase 2A (PP2A). Binds non-specifically to double-stranded DNA, and is found as a hexamer or dodecamer upon DNA binding. Binds to LEM domain-containing nuclear proteins such as LEMD3/MAN1, TMPO/LAP2 and EMD (emerin). Interacts with ANKLE1 (via LEM domain); the interaction may favor BANF1 dimerization. Interacts with CRX and LMNA (lamin-A). Binds linker histone H1.1 and core histones H3. Interacts with LEMD2 (via LEM domain). Interacts with PARP1; interaction takes place in response to oxidative DNA damage. In terms of processing, ser-4 is the major site of phosphorylation as compared to Thr-2 and Thr-3. Phosphorylation on Thr-2; Thr-3 and Ser-4 disrupts its ability to bind DNA and reduces its ability to bind LEM domain-containing proteins. Non phosphorylated BAF seems to enhance binding between EMD and LMNA. Dephosphorylated by protein phosphatase 2A (PP2A) following interaction with ANKLE2/LEM4 during mitotic exit, leading to mitotic nuclear envelope reassembly.

It localises to the nucleus. Its subcellular location is the chromosome. The protein localises to the nucleus envelope. It is found in the cytoplasm. Its function is as follows. Non-specific DNA-binding protein that plays key roles in mitotic nuclear reassembly, chromatin organization, DNA damage response, gene expression and intrinsic immunity against foreign DNA. Contains two non-specific double-stranded DNA (dsDNA)-binding sites which promote DNA cross-bridging. Plays a key role in nuclear membrane reformation at the end of mitosis by driving formation of a single nucleus in a spindle-independent manner. Transiently cross-bridges anaphase chromosomes via its ability to bridge distant DNA sites, leading to the formation of a dense chromatin network at the chromosome ensemble surface that limits membranes to the surface. Also acts as a negative regulator of innate immune activation by restricting CGAS activity toward self-DNA upon acute loss of nuclear membrane integrity. Outcompetes CGAS for DNA-binding, thereby preventing CGAS activation and subsequent damaging autoinflammatory responses. Also involved in DNA damage response: interacts with PARP1 in response to oxidative stress, thereby inhibiting the ADP-ribosyltransferase activity of PARP1. Involved in the recognition of exogenous dsDNA in the cytosol: associates with exogenous dsDNA immediately after its appearance in the cytosol at endosome breakdown and is required to avoid autophagy. In case of poxvirus infection, has an antiviral activity by blocking viral DNA replication. The sequence is that of Barrier-to-autointegration factor (BANF1) from Bos taurus (Bovine).